A 426-amino-acid chain; its full sequence is Enolase (426 aa).

Gln163 lines the (2R)-2-phosphoglycerate pocket. Glu205 functions as the Proton donor in the catalytic mechanism. Residues Asp242, Glu283, and Asp310 each contribute to the Mg(2+) site. The (2R)-2-phosphoglycerate site is built by Lys335, Arg364, Ser365, and Lys386. Lys335 functions as the Proton acceptor in the catalytic mechanism.

Belongs to the enolase family. The cofactor is Mg(2+).

It localises to the cytoplasm. The protein resides in the secreted. It is found in the cell surface. The enzyme catalyses (2R)-2-phosphoglycerate = phosphoenolpyruvate + H2O. Its pathway is carbohydrate degradation; glycolysis; pyruvate from D-glyceraldehyde 3-phosphate: step 4/5. Functionally, catalyzes the reversible conversion of 2-phosphoglycerate (2-PG) into phosphoenolpyruvate (PEP). It is essential for the degradation of carbohydrates via glycolysis. This is Enolase from Cutibacterium acnes (strain DSM 16379 / KPA171202) (Propionibacterium acnes).